Reading from the N-terminus, the 223-residue chain is Arginine kinase (223 aa).

The Phosphagen kinase C-terminal domain occupies 56–222 (FVISTRVRLI…LELIKIEKEM (167 aa)). ATP contacts are provided by residues 59 to 63 (STRVR) and histidine 68. Cysteine 141 serves as a coordination point for L-arginine. ATP-binding positions include 150–154 (RASVH) and 175–180 (RGTRGE). Glutamate 180 serves as a coordination point for L-arginine.

It belongs to the ATP:guanido phosphotransferase family.

It catalyses the reaction L-arginine + ATP = N(omega)-phospho-L-arginine + ADP + H(+). This chain is Arginine kinase, found in Chionoecetes opilio (Atlantic snow crab).